The following is a 165-amino-acid chain: Cell division protein SepF (165 aa).

Residues 23 to 75 (DEYGDYAGDYETQETAPVATRSSKRESRPAPVSDLSERRRPASGPTGVVAELS) form a disordered region.

It belongs to the SepF family. As to quaternary structure, homodimer. Interacts with FtsZ.

Its subcellular location is the cytoplasm. Its function is as follows. Cell division protein that is part of the divisome complex and is recruited early to the Z-ring. Probably stimulates Z-ring formation, perhaps through the cross-linking of FtsZ protofilaments. Its function overlaps with FtsA. This Nocardioides sp. (strain ATCC BAA-499 / JS614) protein is Cell division protein SepF.